Here is a 1162-residue protein sequence, read N- to C-terminus: Lysine-specific demethylase 2A (1162 aa).

Serine 28 is subject to Phosphoserine. The region spanning 148-316 (FSHTRLENMV…MQLKIYNIED (169 aa)) is the JmjC domain. Threonine 209 contributes to the substrate binding site. Histidine 212 and aspartate 214 together coordinate Fe cation. Lysine 229 is a binding site for substrate. Position 284 (histidine 284) interacts with Fe cation. Residues 367–389 (GLESGNGDEEAVDREPRRLSSRR) form a disordered region. A phosphoserine mark is found at serine 390 and serine 394. A Glycyl lysine isopeptide (Lys-Gly) (interchain with G-Cter in SUMO2) cross-link involves residue lysine 505. The disordered stretch occupies residues 532-557 (VPTIPITKPHTMKPAPRLTPVRPAAA). A Phosphothreonine modification is found at threonine 550. Residue serine 558 is modified to Phosphoserine. A CXXC-type zinc finger spans residues 564 to 610 (ARRRRVRCRKCKACVQGECGVCHYCRDMKKFGGPGRMKQSCVLRQCL). Residues cysteine 571, cysteine 574, cysteine 577, cysteine 582, cysteine 585, cysteine 588, cysteine 604, cysteine 609, cysteine 620, and cysteine 623 each coordinate Zn(2+). The PHD-type zinc finger occupies 617–678 (SVTCSLCGEV…CWECPKCYQE (62 aa)). Threonine 632 is subject to Phosphothreonine. Zn(2+) is bound by residues cysteine 642, cysteine 645, histidine 650, cysteine 653, cysteine 672, and cysteine 675. Phosphoserine is present on serine 692. Residues 704–789 (PLRSCDEPLT…PSGKKELSEV (86 aa)) form a disordered region. Threonine 713 is modified (phosphothreonine). Residues serine 718 and serine 731 each carry the phosphoserine modification. 2 stretches are compositionally biased toward basic and acidic residues: residues 746 to 757 (SDHHSASRDERF) and 771 to 789 (TMVREKENNPSGKKELSEV). Serine 825, serine 832, serine 869, and serine 883 each carry phosphoserine. Positions 839-887 (HCPARTPQRGDEEGLGGEEEEEEEEEEEDDSAEEGGAARLNGRGSWAQD) are disordered. Acidic residues predominate over residues 851-871 (EGLGGEEEEEEEEEEEDDSAE). The F-box domain maps to 889 to 936 (DESWMQREVWMSVFRYLSRRELCECMRVCKTWYKWCCDKRLWTKIDLS). LRR repeat units lie at residues 961 to 982 (WTNISKKQLTWLVNRLPGLKDL) and 984 to 1010 (LAGCSWSAVSALSTSSCPLLRTLDLRW). Arginine 1020 carries the post-translational modification ADP-ribosylarginine. 4 LRR repeats span residues 1048 to 1073 (GLDITDATLRLIIRHMPLLSRLDLSH), 1074 to 1103 (CSHLTDQSSNLLTAVGSSTRYSLTELNMAG), 1104 to 1128 (CNKLTDQTLIYLRRIANVTLIDLRG), and 1129 to 1156 (CKQITRKACEHFISDLSINSLYCLSDEK).

Belongs to the JHDM1 histone demethylase family. In terms of assembly, interacts with CBX5/HP1A; the interaction promotes CBX5 localization to chromatin. The SKP1-KDM2A complex interacts with UBB. Part of a SCF (SKP1-cullin-F-box) protein ligase complex. Requires Fe(2+) as cofactor. In terms of processing, mono-ADP-ribosylated at Arg-1020 in response to DNA damage, leading to displacement from chromatin, resulting in increased dimethylation of histone H3 at 'Lys-36'. In terms of tissue distribution, widely expressed, with highest levels in brain, testis and ovary, followed by lung.

It localises to the nucleus. Its subcellular location is the nucleoplasm. The protein resides in the chromosome. The enzyme catalyses N(6),N(6)-dimethyl-L-lysyl(36)-[histone H3] + 2 2-oxoglutarate + 2 O2 = L-lysyl(36)-[histone H3] + 2 formaldehyde + 2 succinate + 2 CO2. Functionally, histone demethylase that specifically demethylates 'Lys-36' of histone H3, thereby playing a central role in histone code. Preferentially demethylates dimethylated H3 'Lys-36' residue while it has weak or no activity for mono- and tri-methylated H3 'Lys-36'. May also recognize and bind to some phosphorylated proteins and promote their ubiquitination and degradation. Required to maintain the heterochromatic state. Associates with centromeres and represses transcription of small non-coding RNAs that are encoded by the clusters of satellite repeats at the centromere. Required to sustain centromeric integrity and genomic stability, particularly during mitosis. Regulates circadian gene expression by repressing the transcriptional activator activity of CLOCK-BMAL1 heterodimer and RORA in a catalytically-independent manner. The protein is Lysine-specific demethylase 2A (KDM2A) of Homo sapiens (Human).